A 294-amino-acid polypeptide reads, in one-letter code: 2,4-diacetylphloroglucinol hydrolase (294 aa).

Residues H129, E160, H270, and E274 each coordinate Zn(2+).

The protein belongs to the DAPG/phloretin hydrolase family. As to quaternary structure, homodimer. It depends on Zn(2+) as a cofactor.

It catalyses the reaction 2,4-diacetylphloroglucinol + H2O = 2-acetylphloroglucinol + acetate. Its activity is regulated as follows. Specifically and significantly activated by CoCl(2). Competitively inhibited by MAPG, but not by 2-hydroxy- and 4-hydroxyacetophenone. In terms of biological role, hydrolase that specifically degrades the potent antimicrobial compound 2,4-diacetylphloroglucinol (DAPG) to equimolar amounts of mildly toxic monoacetylphloroglucinol (MAPG) and acetate. The sequence is that of 2,4-diacetylphloroglucinol hydrolase from Pseudomonas sp.